Reading from the N-terminus, the 695-residue chain is Solute carrier family 53 member 1 (695 aa).

Topologically, residues 1 to 228 (MKFAEHLSAH…RVPPLGAAQP (228 aa)) are cytoplasmic. The SPX domain maps to 2–224 (KFAEHLSAHI…MKRLRVPPLG (223 aa)). Residues 158 to 165 (KILKKHDK) are important for inositol polyphosphate binding. The helical transmembrane segment at 229–259 (APAWTTFRVGLFCGIFIVLNITLVFAAVFKL) threads the bilayer. The Extracellular portion of the chain corresponds to 260-264 (ETDRT). The helical transmembrane segment at 265–296 (VWPLIRIYRGGFLLIEFLFLLGINTYGWRQAG) threads the bilayer. Topologically, residues 297-309 (VNHVLIFELNPRN) are cytoplasmic. Residues 310–337 (NLSHQHLFEIAGFLGILWCLSLLACFFA) traverse the membrane as a helical segment. The Extracellular segment spans residues 338–343 (PISIIP). Residues 344–365 (IYVYPLALYGFMVFFLINPTKT) traverse the membrane as a helical segment. An intramembrane region (helical) is located at residues 366-383 (FYYKSRFWLLKLLFRVFT). Residues 384–388 (APFHK) lie on the Cytoplasmic side of the membrane. A discontinuously helical membrane pass occupies residues 389-422 (VGFADFWLADQLNSLSVILMDLEYMICFYSFELK). 2 residues coordinate phosphate: aspartate 398 and asparagine 401. Topologically, residues 423 to 429 (WDESKGL) are extracellular. A discontinuously helical transmembrane segment spans residues 430 to 471 (LPNDPQEPEFCHKYSYGVRAIVQCIPAWLRFIQCLRRYRDTR). Residues 439–642 (FCHKYSYGVR…LNADDQTLLE (204 aa)) form the EXS domain. Arginine 472 is a topological domain (cytoplasmic). Residues 473-503 (AFPHLVNAGKYSTTFFTVTFAALYSTHEEQN) form a helical membrane-spanning segment. Residues lysine 482 and tyrosine 483 each coordinate phosphate. Residues 504 to 506 (HSD) lie on the Extracellular side of the membrane. The chain crosses the membrane as a helical span at residues 507–534 (TVVFFYLWVFFCIISSCYTLIWDLKMDW). The Cytoplasmic segment spans residues 535 to 553 (GLFDKNAGENTFLREEIVY). The chain crosses the membrane as a discontinuously helical span at residues 554-584 (PQKAYYYCAIIEDVILRFAWTIQISITATFK). Arginine 570 is a phosphate binding site. Residues 585–586 (PH) lie on the Extracellular side of the membrane. A helical membrane pass occupies residues 587 to 625 (VGNIIATVFAPLEVFRRFVWNFFRLENEHLNNCGEFRAV). Phosphate contacts are provided by arginine 602 and arginine 603. Over 626-695 (RDISVAPLNA…IEDTDDEANT (70 aa)) the chain is Cytoplasmic. The residue at position 667 (serine 667) is a Phosphoserine. The disordered stretch occupies residues 671 to 695 (PRLASQSKARDTKVLIEDTDDEANT). Position 689 is a phosphothreonine (threonine 689).

This sequence belongs to the SYG1 (TC 2.A.94) family. Homodimer. In terms of tissue distribution, expressed in pancreatic islets.

It localises to the cell membrane. The enzyme catalyses phosphate(in) = phosphate(out). In terms of biological role, inorganic ion transporter that mediates phosphate ion export across plasma membrane. Plays a major role in phosphate homeostasis, preventing intracellular phosphate accumulation and possible calcium phosphate precipitation, ultimately preserving calcium signaling. Binds inositol hexakisphosphate (Ins6P) and similar inositol polyphosphates, such as 5-diphospho-inositol pentakisphosphate (5-InsP7), which are important intracellular signaling molecules involved in regulation of phosphate flux. Its function is as follows. (Microbial infection) Receptor for xenotropic and polytropic murine leukemia (X- and P-MLV) retroviruses. Confers susceptibility to X- or P-MLV infection in vitro. This chain is Solute carrier family 53 member 1, found in Mus musculus (Mouse).